The primary structure comprises 288 residues: SUR7 family protein pun1 (288 aa).

Residues 1-11 (MGMGFNPIKAL) lie on the Cytoplasmic side of the membrane. A helical transmembrane segment spans residues 12–32 (FTGIGTVCVGVGALLSILCII). Residues Asn-33, Asn-50, Asn-59, Asn-66, Asn-122, Asn-153, and Asn-160 are each glycosylated (N-linked (GlcNAc...) asparagine). Residues 33-185 (NQTQHNIAFQ…GACYAMRAMY (153 aa)) are Extracellular-facing. The helical transmembrane segment at 186-206 (ILGFIFFALTIVSIVISCLPF) threads the bilayer. Residues 207 to 210 (FGPL) lie on the Cytoplasmic side of the membrane. A helical membrane pass occupies residues 211-231 (FLNVFSFFATIFTFIAAVIAV). Residues 232–257 (ATYRIAISELEKNIEILNIPIVLGKK) are Extracellular-facing. The helical transmembrane segment at 258–278 (IYAYSFLSAAAGLAACILYFI) threads the bilayer. Residues 279–288 (GNLTSGYSPL) lie on the Cytoplasmic side of the membrane.

This sequence belongs to the SUR7 family.

It localises to the golgi apparatus membrane. The protein localises to the cell membrane. It is found in the cell tip. Its function is as follows. Contributes to the wild-type cellular response to nitrogen stress through signaling pathways that regulate the expression of genes involved in amino acid biosynthesis. Required for wild-type filamentous growth, cell growth, and cell-cell adhesion. The chain is SUR7 family protein pun1 (pun1) from Schizosaccharomyces pombe (strain 972 / ATCC 24843) (Fission yeast).